Reading from the N-terminus, the 342-residue chain is RNA 3'-terminal phosphate cyclase (342 aa).

Residues Gln-103 and 283 to 287 (YLADQ) contribute to the ATP site. His-308 serves as the catalytic Tele-AMP-histidine intermediate.

This sequence belongs to the RNA 3'-terminal cyclase family. Type 1 subfamily.

The protein localises to the cytoplasm. The catalysed reaction is a 3'-end 3'-phospho-ribonucleotide-RNA + ATP = a 3'-end 2',3'-cyclophospho-ribonucleotide-RNA + AMP + diphosphate. Functionally, catalyzes the conversion of 3'-phosphate to a 2',3'-cyclic phosphodiester at the end of RNA. The mechanism of action of the enzyme occurs in 3 steps: (A) adenylation of the enzyme by ATP; (B) transfer of adenylate to an RNA-N3'P to produce RNA-N3'PP5'A; (C) and attack of the adjacent 2'-hydroxyl on the 3'-phosphorus in the diester linkage to produce the cyclic end product. The biological role of this enzyme is unknown but it is likely to function in some aspects of cellular RNA processing. This Escherichia coli O157:H7 protein is RNA 3'-terminal phosphate cyclase (rtcA).